The following is a 281-amino-acid chain: Nucleotide-binding protein MADE_1004170 (281 aa).

An ATP-binding site is contributed by Gly8–Ser15. Asp56–Asn59 provides a ligand contact to GTP.

This sequence belongs to the RapZ-like family.

In terms of biological role, displays ATPase and GTPase activities. This is Nucleotide-binding protein MADE_1004170 from Alteromonas mediterranea (strain DSM 17117 / CIP 110805 / LMG 28347 / Deep ecotype).